A 247-amino-acid chain; its full sequence is MLRRVTLKETWEVAKNIKAFRFDEKLDFTPGQFIMVWLPGVNEKPFSLADKDLIVVKRVGPFTSKLFTLEEGDYLWIRGPYGNGFKEVKGKVALVAGGIGIPPIYALAKHGKLEEKVLIYGARGKDELALLDIENYVDEIVITTDDGSYGIKGFPTDVLAKRKEEFSQVYACGPEIMLAKVLEIMNYERTQISAERYMKCGIGICGSCALGPYLVCRDGPVFTGEQLKDTEFGKFTRLPDGRIKGLR.

The FAD-binding FR-type domain maps to Met1–Glu87. Cys200, Cys205, Cys208, and Cys216 together coordinate [2Fe-2S] cluster.

It belongs to the PyrK family. As to quaternary structure, heterotetramer of 2 PyrK and 2 PyrD type B subunits. [2Fe-2S] cluster is required as a cofactor. FAD serves as cofactor.

It functions in the pathway pyrimidine metabolism; UMP biosynthesis via de novo pathway; orotate from (S)-dihydroorotate (NAD(+) route): step 1/1. In terms of biological role, responsible for channeling the electrons from the oxidation of dihydroorotate from the FMN redox center in the PyrD type B subunit to the ultimate electron acceptor NAD(+). This is Probable dihydroorotate dehydrogenase B (NAD(+)), electron transfer subunit from Pyrococcus horikoshii (strain ATCC 700860 / DSM 12428 / JCM 9974 / NBRC 100139 / OT-3).